The sequence spans 115 residues: Transmembrane protein 218 (115 aa).

The next 3 membrane-spanning stretches (helical) occupy residues 5–25 (VLGV…VLLL), 38–58 (FSVI…LLFP), and 81–101 (YVLL…VLIH).

It belongs to the TMEM218 family. In terms of assembly, interacts with TMEM67.

It is found in the membrane. It localises to the cell projection. The protein resides in the cilium. In terms of biological role, may be involved in ciliary biogenesis or function. In Homo sapiens (Human), this protein is Transmembrane protein 218 (TMEM218).